The primary structure comprises 91 residues: Hepcidin-1 (91 aa).

The N-terminal stretch at 1 to 24 (MKLSNVFLAAVVILTCVCVFQITA) is a signal peptide. Residues 25–64 (VPFIQQVQDEHHVESEELQENQHLTEAEHRQTDPLVLFRT) constitute a propeptide that is removed on maturation. 4 cysteine pairs are disulfide-bonded: cysteine 73–cysteine 89, cysteine 76–cysteine 79, cysteine 77–cysteine 85, and cysteine 80–cysteine 88.

Belongs to the hepcidin family.

Its subcellular location is the secreted. Seems to act as a signaling molecule involved in the maintenance of iron homeostasis. Seems to be required in conjunction with HFE to regulate both intestinal iron absorption and iron storage in macrophages. May also have antimicrobial activity. The chain is Hepcidin-1 (hamp1) from Danio rerio (Zebrafish).